A 191-amino-acid polypeptide reads, in one-letter code: Glucose-6-phosphate 1-dehydrogenase (191 aa).

Position 2 is an N-acetylalanine (A2). S8 is modified (phosphoserine). At T10 the chain carries Phosphothreonine. Residues 38–45 and Y86 each bind NADP(+); that span reads GASGDLAK. D101 serves as a coordination point for D-glucose 6-phosphate. H106 functions as the Proton acceptor in the catalytic mechanism. NADP(+) is bound at residue R163. K173 carries the post-translational modification N6-acetyllysine. The NADP(+) site is built by Y179 and W185. Y179 carries the phosphotyrosine modification.

It belongs to the glucose-6-phosphate dehydrogenase family. In terms of assembly, homotetramer; dimer of dimers. Interacts with SIRT2; the interaction is enhanced by H(2)O(2) treatment. Forms a ternary complex with ALDOB and TP53; this interaction is direct. ALDOB stabilizes the complex inhibiting G6PD activity and keeping oxidative pentose phosphate metabolism in check. Acetylated by ELP3; acetylation inhibits its homodimerization and enzyme activity. Deacetylated by SIRT2; deacetylation stimulates its enzyme activity.

The protein resides in the cytoplasm. Its subcellular location is the cytosol. It localises to the membrane. It carries out the reaction D-glucose 6-phosphate + NADP(+) = 6-phospho-D-glucono-1,5-lactone + NADPH + H(+). It functions in the pathway carbohydrate degradation; pentose phosphate pathway; D-ribulose 5-phosphate from D-glucose 6-phosphate (oxidative stage): step 1/3. Its function is as follows. Cytosolic glucose-6-phosphate dehydrogenase that catalyzes the first and rate-limiting step of the oxidative branch within the pentose phosphate pathway/shunt, an alternative route to glycolysis for the dissimilation of carbohydrates and a major source of reducing power and metabolic intermediates for fatty acid and nucleic acid biosynthetic processes. This chain is Glucose-6-phosphate 1-dehydrogenase (G6PD), found in Didelphis virginiana (North American opossum).